The sequence spans 254 residues: 4-hydroxy-tetrahydrodipicolinate reductase (254 aa).

NAD(+) contacts are provided by residues 8-13 (GCSGKM), Asp35, 86-88 (CST), and 110-113 (SANM). The Proton donor/acceptor role is filled by His143. Residue His144 coordinates (S)-2,3,4,5-tetrahydrodipicolinate. Residue Lys147 is the Proton donor of the active site. A (S)-2,3,4,5-tetrahydrodipicolinate-binding site is contributed by 153 to 154 (GT).

Belongs to the DapB family.

It localises to the cytoplasm. It carries out the reaction (S)-2,3,4,5-tetrahydrodipicolinate + NAD(+) + H2O = (2S,4S)-4-hydroxy-2,3,4,5-tetrahydrodipicolinate + NADH + H(+). It catalyses the reaction (S)-2,3,4,5-tetrahydrodipicolinate + NADP(+) + H2O = (2S,4S)-4-hydroxy-2,3,4,5-tetrahydrodipicolinate + NADPH + H(+). Its pathway is amino-acid biosynthesis; L-lysine biosynthesis via DAP pathway; (S)-tetrahydrodipicolinate from L-aspartate: step 4/4. In terms of biological role, catalyzes the conversion of 4-hydroxy-tetrahydrodipicolinate (HTPA) to tetrahydrodipicolinate. The chain is 4-hydroxy-tetrahydrodipicolinate reductase from Clostridium perfringens (strain SM101 / Type A).